A 258-amino-acid chain; its full sequence is Isoprenyl transferase (258 aa).

Asp-38 is a catalytic residue. Asp-38 is a Mg(2+) binding site. Substrate contacts are provided by residues 39 to 42 (GNGR), Trp-43, Arg-51, His-55, and 83 to 85 (STE). The active-site Proton acceptor is the Asn-86. Substrate is bound by residues Trp-87, Arg-89, Arg-206, and 212 to 214 (RIS). Glu-225 provides a ligand contact to Mg(2+).

Belongs to the UPP synthase family. In terms of assembly, homodimer. Requires Mg(2+) as cofactor.

Catalyzes the condensation of isopentenyl diphosphate (IPP) with allylic pyrophosphates generating different type of terpenoids. This is Isoprenyl transferase from Bacillus thuringiensis subsp. konkukian (strain 97-27).